The primary structure comprises 342 residues: Succinoglycan biosynthesis protein ExoU (342 aa).

The protein belongs to the glycosyltransferase 2 family.

It is found in the cytoplasm. It functions in the pathway glycan metabolism; exopolysaccharide biosynthesis. Glycosyltransferase required for the synthesis of succinoglycan (EPS I). Needed for the addition of the sixth sugar (glucose), catalyzes the formation of a beta-1,6 linkage between the fifth and sixth sugar. This chain is Succinoglycan biosynthesis protein ExoU (exoU), found in Rhizobium meliloti (strain 1021) (Ensifer meliloti).